A 450-amino-acid polypeptide reads, in one-letter code: Signal recognition particle 54 kDa protein (450 aa).

GTP is bound by residues 107-114, 188-192, and 247-250; these read GIQGSGKT, DTAGR, and TKLD.

The protein belongs to the GTP-binding SRP family. SRP54 subfamily. In terms of assembly, part of the signal recognition particle protein translocation system, which is composed of SRP and FtsY. Archaeal SRP consists of a 7S RNA molecule of 300 nucleotides and two protein subunits: SRP54 and SRP19.

The protein localises to the cytoplasm. The catalysed reaction is GTP + H2O = GDP + phosphate + H(+). Functionally, involved in targeting and insertion of nascent membrane proteins into the cytoplasmic membrane. Binds to the hydrophobic signal sequence of the ribosome-nascent chain (RNC) as it emerges from the ribosomes. The SRP-RNC complex is then targeted to the cytoplasmic membrane where it interacts with the SRP receptor FtsY. The sequence is that of Signal recognition particle 54 kDa protein from Methanococcus maripaludis (strain C6 / ATCC BAA-1332).